Here is a 262-residue protein sequence, read N- to C-terminus: Lens fiber major intrinsic protein (262 aa).

The Cytoplasmic segment spans residues 1–9 (MRELRSSSF). A helical transmembrane segment spans residues 10-29 (WRAILAEFLGSLLYTLLGLG). The Extracellular segment spans residues 30-41 (ASLRWAPGPHGV). The helical transmembrane segment at 42–59 (LGSALAFGLAQATLVQAL) threads the bilayer. Topologically, residues 60–61 (GH) are cytoplasmic. The discontinuously helical intramembrane region spans 62-77 (VSGGHINPAITLAFLL). The short motif at 68-70 (NPA) is the NPA 1 element. The Cytoplasmic segment spans residues 78–82 (ASQLS). Residues 83–106 (LPRALGYLLAQLLGALAGAGVLYG) form a helical membrane-spanning segment. Residues 107–127 (VTPAAVRGTLGLSALHPSVGP) lie on the Extracellular side of the membrane. The helical transmembrane segment at 128-148 (GQGTVVELLLTAQFILCVFAS) threads the bilayer. Topologically, residues 149 to 156 (FDDRHDGR) are cytoplasmic. Residues 157–175 (PGSAALPVGFSLALGHLFG) form a helical membrane-spanning segment. The Extracellular segment spans residues 176-178 (IPF). An intramembrane region (discontinuously helical) is located at residues 179–193 (TGAGMNPARSFAPAV). Residues 184-186 (NPA) carry the NPA 2 motif. At 194–200 (ITRNFTN) the chain is on the extracellular side. Residues 201 to 222 (HWVFWAGPLLGAALAALLYELA) traverse the membrane as a helical segment. The Cytoplasmic segment spans residues 223-262 (LCPRARSMAERLAVLRGEPPAAAPPPEPPAEPLELKTQGL). The segment at 227-237 (ARSMAERLAVL) is interaction with CALM. The disordered stretch occupies residues 240 to 262 (EPPAAAPPPEPPAEPLELKTQGL). The segment covering 243–253 (AAAPPPEPPAE) has biased composition (pro residues).

Belongs to the MIP/aquaporin (TC 1.A.8) family. As to quaternary structure, homotetramer; each monomer provides an independent water pore. Two homotetramers on opposing membranes can dimerize, forming a cell-cell junction. Interacts with CALM; the calcium-calmodulin/CALM complex interacts with the cytoplasmic domains of two aquaporins, leading to channel closure. During early stages of lens development, interacts through its C-terminal region with Cx56 and GJA8/Cx45.6. In terms of tissue distribution, major component of lens fiber gap junctions.

It is found in the cell membrane. The protein localises to the cell junction. It carries out the reaction H2O(in) = H2O(out). Its activity is regulated as follows. The water channel activity is inhibited by calcium through calmodulin/CALM. Functionally, aquaporins form homotetrameric transmembrane channels, with each monomer independently mediating water transport across the plasma membrane along its osmotic gradient. Specifically expressed in lens fiber cells, this aquaporin is crucial for maintaining lens water homeostasis and transparency. Beyond water permeability, it also acts as a cell-to-cell adhesion molecule, forming thin junctions between lens fiber cells that are essential for maintaining the ordered structure and transparency of the lens. The protein is Lens fiber major intrinsic protein of Gallus gallus (Chicken).